A 185-amino-acid chain; its full sequence is Ribosome-recycling factor (185 aa).

The protein belongs to the RRF family.

Its subcellular location is the cytoplasm. Responsible for the release of ribosomes from messenger RNA at the termination of protein biosynthesis. May increase the efficiency of translation by recycling ribosomes from one round of translation to another. This is Ribosome-recycling factor from Clostridium acetobutylicum (strain ATCC 824 / DSM 792 / JCM 1419 / IAM 19013 / LMG 5710 / NBRC 13948 / NRRL B-527 / VKM B-1787 / 2291 / W).